Reading from the N-terminus, the 62-residue chain is Cecropin-A (62 aa).

The first 20 residues, 1 to 20, serve as a signal peptide directing secretion; it reads MNLVKILFCVFACLVFTVTA. The propeptide at 21-24 is removed by a dipeptidylpeptidase; the sequence is VPEP. Position 60 is a threonine amide (threonine 60).

Belongs to the cecropin family.

It is found in the secreted. Functionally, has antibacterial activity. The sequence is that of Cecropin-A from Trichoplusia ni (Cabbage looper).